The sequence spans 126 residues: Fluoride-specific ion channel FluC 1 (126 aa).

4 consecutive transmembrane segments (helical) span residues 1–21 (MAGS…GAWL), 38–58 (WGTF…LALY), 67–87 (LALL…TFAV), and 99–119 (FVSL…AGVG). Gly-77 and Ser-80 together coordinate Na(+).

It belongs to the fluoride channel Fluc/FEX (TC 1.A.43) family.

It localises to the cell inner membrane. It carries out the reaction fluoride(in) = fluoride(out). Na(+) is not transported, but it plays an essential structural role and its presence is essential for fluoride channel function. Functionally, fluoride-specific ion channel. Important for reducing fluoride concentration in the cell, thus reducing its toxicity. In Synechococcus sp. (strain CC9902), this protein is Fluoride-specific ion channel FluC 1.